A 262-amino-acid chain; its full sequence is Protein Pcal_0062 (262 aa).

The protein belongs to the CinA family.

This chain is Protein Pcal_0062, found in Pyrobaculum calidifontis (strain DSM 21063 / JCM 11548 / VA1).